A 387-amino-acid polypeptide reads, in one-letter code: Mannose-6-phosphate isomerase (387 aa).

Belongs to the N-acylglucosamine 2-epimerase family.

The catalysed reaction is D-mannose 6-phosphate = D-fructose 6-phosphate. This chain is Mannose-6-phosphate isomerase (pmi), found in Rhizobium meliloti (strain 1021) (Ensifer meliloti).